A 398-amino-acid chain; its full sequence is S-adenosylmethionine synthase (398 aa).

136-141 provides a ligand contact to ATP; it reads GTGSSD.

The protein belongs to the AdoMet synthase 2 family. Mg(2+) is required as a cofactor.

The catalysed reaction is L-methionine + ATP + H2O = S-adenosyl-L-methionine + phosphate + diphosphate. The protein operates within amino-acid biosynthesis; S-adenosyl-L-methionine biosynthesis; S-adenosyl-L-methionine from L-methionine: step 1/1. Its function is as follows. Catalyzes the formation of S-adenosylmethionine from methionine and ATP. The sequence is that of S-adenosylmethionine synthase from Methanosarcina barkeri (strain Fusaro / DSM 804).